A 462-amino-acid chain; its full sequence is Sensor histidine kinase RegB (462 aa).

Topologically, residues 1-25 are cytoplasmic; sequence MILGPDGILNRDTRGDWWRLRTLIL. A helical membrane pass occupies residues 26 to 45; the sequence is LRWMAVAGQLAAIVVTDWYL. Topologically, residues 46–51 are extracellular; the sequence is GVRLPM. Residues 52–70 form a helical membrane-spanning segment; the sequence is GLCFMAVGASVIANVIATF. The Cytoplasmic segment spans residues 71-78; sequence VFPQNRRL. The chain crosses the membrane as a helical span at residues 79–96; sequence TEFQALMILLFDLTQLSF. Topologically, residues 97-103 are extracellular; the sequence is LLFLTGG. The helical transmembrane segment at 104–123 threads the bilayer; that stretch reads LTNPFALLILAPVTISGVAL. Over 124 to 129 the chain is Cytoplasmic; it reads DVRTTV. A helical membrane pass occupies residues 130-149; it reads ILGAIAIGLLTFTAYFHLPL. The Extracellular segment spans residues 150–164; it reads ILADGSSLSVPRMFE. A helical transmembrane segment spans residues 165 to 182; sequence FGFWLAIVIGILFLGLYS. Topologically, residues 183 to 462 are cytoplasmic; it reads RRVAIEIRSM…PLGENVLIQT (280 aa). A Histidine kinase domain is found at 218–445; that stretch reads AAAHELGTPL…IVEVIWPVDR (228 aa). At H221 the chain carries Phosphohistidine; by autocatalysis.

The protein localises to the cell inner membrane. It carries out the reaction ATP + protein L-histidine = ADP + protein N-phospho-L-histidine.. In terms of biological role, member of the two-component regulatory system RegB/RegA. Involved in the positive regulation of photosynthesis gene expression in response to anaerobiosis. Also involved in positive regulation of the cbbI and cbbII Calvin cycle CO2 fixation operons, as well as in regulation of expression of genes involved in alternative CO2 fixation pathways. Phosphorylates RegA/PrrA. In Cereibacter sphaeroides (Rhodobacter sphaeroides), this protein is Sensor histidine kinase RegB (regB).